Reading from the N-terminus, the 266-residue chain is Transcription factor atoh8 (266 aa).

A disordered region spans residues 140 to 164; the sequence is AASQAPAGGSERAESPRKRAGEPSG. The segment covering 150-160 has biased composition (basic and acidic residues); it reads ERAESPRKRAG. The basic motif; degenerate stretch occupies residues 175 to 188; it reads TRRLLANARERTRV. The region spanning 175-227 is the bHLH domain; it reads TRRLLANARERTRVHTISAAFEALRKQVPCYSYGQKLSKLAILRIACNYILSL. Residues 189 to 227 form a helix-loop-helix motif region; it reads HTISAAFEALRKQVPCYSYGQKLSKLAILRIACNYILSL.

It localises to the nucleus. The protein localises to the nucleus speckle. The protein resides in the cytoplasm. In terms of biological role, transcription factor that binds a palindromic (canonical) core consensus DNA sequence 5'-CANNTG- 3' known as an E-box element, possibly as a heterodimer with other bHLH proteins. During development, is required for heart looping and swim bladder formation by acting in concert with GATA4 and ZFPM1. During the development of both the retina and skeletal muscles is required for neural retinal cell through modulating PAX6 and NEUROG3 expression and myogenic differentiation. The chain is Transcription factor atoh8 from Danio rerio (Zebrafish).